A 281-amino-acid polypeptide reads, in one-letter code: Protein EMBRYO DEFECTIVE 1674 (281 aa).

2 stretches are compositionally biased toward polar residues: residues 1-14 (MTTTRAKSKFQSLS) and 24-41 (PNTSPSTYSKTLPKPNSS). The interval 1-47 (MTTTRAKSKFQSLSACRFTPLPEPNTSPSTYSKTLPKPNSSPGTDGT) is disordered. An SANTA domain is found at 66-153 (VTLSDWWLTK…LGFPYDWEDY (88 aa)).

In terms of biological role, required for normal embryo development. The chain is Protein EMBRYO DEFECTIVE 1674 from Arabidopsis thaliana (Mouse-ear cress).